A 662-amino-acid chain; its full sequence is Zinc finger protein 800 (662 aa).

The segment at 69 to 91 (FECKLCRSLFRGLPNLITHKKFY) adopts a C2H2-type 1; degenerate zinc-finger fold. Residue Lys-132 forms a Glycyl lysine isopeptide (Lys-Gly) (interchain with G-Cter in SUMO2) linkage. Disordered stretches follow at residues 172–197 (ETSSEQLKAVPDADTEVEEAIEPPSI) and 205–224 (AAPTEEQPQESQADLETSDS). A compositionally biased stretch (low complexity) spans 205-216 (AAPTEEQPQESQ). The C2H2-type 2 zinc-finger motif lies at 231–254 (LICCLCRKEFNSRRGVRRHIRKVH). Lys-280 participates in a covalent cross-link: Glycyl lysine isopeptide (Lys-Gly) (interchain with G-Cter in SUMO2). A C2H2-type 3 zinc finger spans residues 288–311 (RSCPVCCKSFATKANVRRHFDEVH). Position 318 is a phosphoserine (Ser-318). Residues 319 to 349 (ITPDIATKPGQPLFLDSASPKKSFKTRKQKS) form a disordered region. Thr-320 is subject to Phosphothreonine. A Phosphoserine modification is found at Ser-337. Basic residues predominate over residues 340–349 (KSFKTRKQKS). A C2H2-type 4 zinc finger spans residues 357–382 (TACKCLLCKRKYSSQIMLKRHMQIVH). The segment at 389–473 (ANSKREKGPN…AGGQQKTRKP (85 aa)) is disordered. Lys-392 participates in a covalent cross-link: Glycyl lysine isopeptide (Lys-Gly) (interchain with G-Cter in SUMO2). The segment covering 414–434 (VESSPPSITHSPQNELKGTNH) has biased composition (polar residues). Ser-420, Ser-424, Ser-453, Ser-455, Ser-458, and Ser-460 each carry phosphoserine. Over residues 456-468 (PKSASPSAAGGQQ) the composition is skewed to low complexity. Lys-474 is covalently cross-linked (Glycyl lysine isopeptide (Lys-Gly) (interchain with G-Cter in SUMO2)). 2 C2H2-type zinc fingers span residues 484–506 (LYCKLCKRQFTSKQNLTKHIELH) and 517–540 (YKCPLCTYETRRKRDVIRHITVVH). 2 disordered regions span residues 573 to 597 (RGPSREEAKHNDSKQDGTSNSPSKK) and 633 to 662 (HHKKTHKANATNSPEGNKTKGRSTRSKALV). A compositionally biased stretch (basic and acidic residues) spans 575–587 (PSREEAKHNDSKQ). Lys-597 is covalently cross-linked (Glycyl lysine isopeptide (Lys-Gly) (interchain with G-Cter in SUMO2)). The C2H2-type 7 zinc-finger motif lies at 616-638 (HRCNKCGKAFAKKTYLEHHKKTH). The span at 651–662 (TKGRSTRSKALV) shows a compositional bias: basic residues.

This sequence belongs to the krueppel C2H2-type zinc-finger protein family.

It localises to the nucleus. May be involved in transcriptional regulation. The protein is Zinc finger protein 800 (Znf800) of Mus musculus (Mouse).